The following is a 593-amino-acid chain: FAD-binding monooxygenase acrE (593 aa).

Residues Thr61–Phe64, Asp73–Ser74, and Tyr79 contribute to the FAD site. Arg71–Asp73 contributes to the NADP(+) binding site. NADP(+) is bound by residues Thr200–Gln206 and Arg223–Ser224.

It belongs to the FAD-binding monooxygenase family. Requires FAD as cofactor.

It functions in the pathway secondary metabolite biosynthesis. Its function is as follows. FAD-binding monooxygenase; part of the cluster that mediates the biosynthesis of acurin A, a highly reduced polyketide coupled to a serine via a peptide bond. The activities of the highly reducing polyketide synthase acrA and the nonribosomal peptide synthetase acrB are collectively responsible for the synthesis of the acurin A core structure with a heptaketide backbone produced by acrA covalently fused to a L-serine by acrB. After the formation of the PK-NRP hybrid product, it is detached from acrB by reductive release to set up the formation of the lactam ring by aldol condensation. The hydrolyase acrC then catalyzes water loss to generate a double bond in the ring. This double bond is probably reduced, which is followed by three oxidations at C-22 to generate the carboxylic acid moiety, involving probably the FAD-binding monooxygenase acrE and the cytochrome P450 monooxygenases acrD and acrF. Finally, a last methylation step performed by the O-methyltransferase acrG leads to the production of acurin A. The polypeptide is FAD-binding monooxygenase acrE (Aspergillus aculeatus (strain ATCC 16872 / CBS 172.66 / WB 5094)).